The following is a 230-amino-acid chain: Cysteine S-methyltransferase OspZ (230 aa).

Residues 49–52 (GITR) form an interaction with host proteins TAB2, TAB3 and ZRANB3 region. Positions 92, 98, 107, 111, 204, and 208 each coordinate S-adenosyl-L-methionine.

This sequence belongs to the NleE/OspZ family. In terms of assembly, monomer.

It localises to the secreted. The protein resides in the host cytoplasm. It is found in the host nucleus. The enzyme catalyses L-cysteinyl-[protein] + S-adenosyl-L-methionine = S-methyl-L-cysteinyl-[protein] + S-adenosyl-L-homocysteine + H(+). Its function is as follows. Cysteine methyltransferase effector that inhibits host cell NF-kappa-B activation by preventing nuclear translocation of host protein RELA/p65. Acts by mediating cysteine methylation of host proteins TAB2 and TAB3: methylation of a conserved cysteine residue of the RanBP2-type zinc finger (NZF) of TAB2 and TAB3 disrupts zinc-binding, thereby inactivating the ubiquitin chain-binding activity of TAB2 and TAB3, leading to NF-kappa-B inactivation. Also mediates cysteine methylation of host protein ZRANB3, inactivating its ability to bind ubiquitin chains. This chain is Cysteine S-methyltransferase OspZ, found in Shigella flexneri.